We begin with the raw amino-acid sequence, 575 residues long: Preterminal protein (575 aa).

The Nuclear localization signal motif lies at 309–318 (RLPRVTRRRR). Residues 314 to 340 (TRRRRRPPSPAPPPEEIEEAAMEVEEP) form a disordered region. The segment covering 328 to 340 (EEIEEAAMEVEEP) has biased composition (acidic residues). At Ser510 the chain carries O-(5'-phospho-DNA)-serine.

This sequence belongs to the adenoviridae terminal protein family. Heterodimer with the polymerase; this heterodimer binds to bp 9 to 18 of the genome. Interacts with host POU2F1; POU2F1 binds to the auxiliary sequences in the inverted terminal repeats and tethers the pTP-POL heterodimer to the origin DNA thereby participating in the assembly of the pre-initiation complex (POL-TP-DBP-NFIA-POU2F1). Preterminal protein is used to replicate viral genome, upon genomic encapsidation it is processed first into iTP and finally into TP by adenovirus protease.

It localises to the host nucleus matrix. Protein covalently bound to the viral DNA that acts as a primer for viral genomic replication by DNA strand displacement. Assembles on the viral origin of replication in an initiation complex with viral polymerase, DBP, host NFIA and host POU2F1/OCT1. During initiation, the polymerase covalently couples the first dCTP with Ser-580 of pTP. The terminal protein stimulates the template activity over 20 fold compared to protein-free templates. Neo-synthesized viral genomes are linked to two preterminal proteins, one for each 5' end. These new genomes are encapsidated in the nucleus, and during capsid maturation by viral protease, preterminal protein is first cleaved into intermediary (iTP), then into mature TP. May play a role in host nuclear matrix localization of genomic DNA. This Fowl adenovirus A serotype 1 (strain CELO / Phelps) (FAdV-1) protein is Preterminal protein.